A 369-amino-acid polypeptide reads, in one-letter code: uncharacterized protein (369 aa).

The protein belongs to the Gfo/Idh/MocA family.

This is an uncharacterized protein from Schizosaccharomyces pombe (strain 972 / ATCC 24843) (Fission yeast).